Consider the following 519-residue polypeptide: Acetylcholine receptor subunit gamma (519 aa).

A signal peptide spans 1–22 (MHGGQGPQLLLLLLATCLGAQS). The Extracellular segment spans residues 23-240 (RNQEERLLAD…VVFYLLIQRK (218 aa)). Residues N52 and N163 are each glycosylated (N-linked (GlcNAc...) asparagine). The cysteines at positions 150 and 164 are disulfide-linked. A run of 3 helical transmembrane segments spans residues 241–265 (PLFY…IYFL), 274–292 (CTVA…FLVA), and 308–329 (YLTF…VLNV). Topologically, residues 330–476 (SLRSPHTHSM…WLLVGRVLDR (147 aa)) are cytoplasmic. A helical membrane pass occupies residues 477–497 (VCFLAMLSLFICGTAGIFLMA).

The protein belongs to the ligand-gated ion channel (TC 1.A.9) family. Acetylcholine receptor (TC 1.A.9.1) subfamily. Gamma/CHRNG sub-subfamily. In terms of assembly, pentamer of two alpha chains, and one each of the beta, delta, and gamma (in immature muscle) or epsilon (in mature muscle) chains.

The protein resides in the postsynaptic cell membrane. It localises to the cell membrane. It carries out the reaction K(+)(in) = K(+)(out). The enzyme catalyses Na(+)(in) = Na(+)(out). Functionally, after binding acetylcholine, the AChR responds by an extensive change in conformation that affects all subunits and leads to opening of an ion-conducting channel across the plasma membrane. The sequence is that of Acetylcholine receptor subunit gamma (Chrng) from Rattus norvegicus (Rat).